The following is a 387-amino-acid chain: Phosphoglycerate kinase (387 aa).

Residues 21-23 (DLN), Arg36, 59-62 (HLGR), Arg113, and Arg146 each bind substrate. Residues Lys197, Glu314, and 340-343 (GGDT) contribute to the ATP site.

Belongs to the phosphoglycerate kinase family. Monomer.

Its subcellular location is the cytoplasm. The enzyme catalyses (2R)-3-phosphoglycerate + ATP = (2R)-3-phospho-glyceroyl phosphate + ADP. It participates in carbohydrate degradation; glycolysis; pyruvate from D-glyceraldehyde 3-phosphate: step 2/5. The protein is Phosphoglycerate kinase of Aeromonas hydrophila subsp. hydrophila (strain ATCC 7966 / DSM 30187 / BCRC 13018 / CCUG 14551 / JCM 1027 / KCTC 2358 / NCIMB 9240 / NCTC 8049).